Here is a 579-residue protein sequence, read N- to C-terminus: Nif-specific regulatory protein (579 aa).

In terms of domain architecture, GAF spans 40 to 187 (DPVAEVPQIF…MVASLLEQAL (148 aa)). In terms of domain architecture, Sigma-54 factor interaction spans 226–454 (IVGSSPAIAE…LENCVNRAAA (229 aa)). ATP contacts are provided by residues 254–261 (GESGTGKE) and 317–326 (ADGGTLFLDE). Residues 464 to 536 (EELACRQGAC…PLRTKTAQLS (73 aa)) are inter-domain linker. Positions 468 and 473 each coordinate a divalent metal cation. A disordered region spans residues 502 to 529 (RVSAPPPEPAPAPEPAPEAPPREEVPLR). Tandem repeats lie at residues 505–506 (AP), 507–508 (PP), 509–510 (EP), 511–512 (AP), 513–514 (AP), 515–516 (EP), and 517–518 (AP). The tract at residues 505 to 518 (APPPEPAPAPEPAP) is 7 X 2 AA tandem repeats of X-P. Residues 505-520 (APPPEPAPAPEPAPEA) show a composition bias toward pro residues. The segment at 537–579 (REELLRALESAGWVQAKAARLLGMTPRQIAYALQKFEIELRKI) is C-terminal DNA-binding domain. The segment at residues 551–570 (QAKAARLLGMTPRQIAYALQ) is a DNA-binding region (H-T-H motif).

Interacts with sigma-54.

Required for activation of most nif operons, which are directly involved in nitrogen fixation. The polypeptide is Nif-specific regulatory protein (nifA1) (Rhodobacter capsulatus (strain ATCC BAA-309 / NBRC 16581 / SB1003)).